The primary structure comprises 334 residues: Ornithine carbamoyltransferase (334 aa).

Carbamoyl phosphate-binding positions include 56 to 59 (STRT), Q83, R107, and 134 to 137 (HPTQ). L-ornithine contacts are provided by residues N168, D232, and 236 to 237 (SM). Carbamoyl phosphate is bound by residues 274–275 (CL) and R320.

Belongs to the aspartate/ornithine carbamoyltransferase superfamily. OTCase family.

It is found in the cytoplasm. The catalysed reaction is carbamoyl phosphate + L-ornithine = L-citrulline + phosphate + H(+). It participates in amino-acid biosynthesis; L-arginine biosynthesis; L-arginine from L-ornithine and carbamoyl phosphate: step 1/3. Functionally, reversibly catalyzes the transfer of the carbamoyl group from carbamoyl phosphate (CP) to the N(epsilon) atom of ornithine (ORN) to produce L-citrulline. This is Ornithine carbamoyltransferase from Escherichia coli O45:K1 (strain S88 / ExPEC).